A 41-amino-acid chain; its full sequence is Large ribosomal subunit protein bL36 (41 aa).

It belongs to the bacterial ribosomal protein bL36 family.

The sequence is that of Large ribosomal subunit protein bL36 from Bartonella bacilliformis (strain ATCC 35685 / KC583 / Herrer 020/F12,63).